The primary structure comprises 4690 residues: Nonribosomal peptide synthetase sidN (4690 aa).

Residues 238–656 (ARVRENPGRI…LGRLSSDQIK (419 aa)) are adenylation 1. The Carrier 1 domain maps to 779–856 (SSSIPMLQSV…DLDTKAQQAL (78 aa)). O-(pantetheine 4'-phosphoryl)serine is present on serine 816. A condensation 1 region spans residues 925 to 1175 (PGGKAFIQHT…AFGNTMSGRF (251 aa)). Positions 1349–1760 (EFAQKSPNAI…GRKDDLVKIR (412 aa)) are adenylation 2. Residues 1889–1965 (PAWCIKHRPL…DLINHLSVKR (77 aa)) form the Carrier 2 domain. Residue serine 1926 is modified to O-(pantetheine 4'-phosphoryl)serine. Residues 2001-2285 (PTTVFQDGML…SERLLESQLV (285 aa)) form a condensation 2 region. The interval 2464–2869 (TWAKTHPEWK…GRKDEQVKVR (406 aa)) is adenylation 3. A Carrier 3 domain is found at 3002–3079 (RDLTSIEKQI…ELGRMKNALK (78 aa)). Serine 3040 bears the O-(pantetheine 4'-phosphoryl)serine mark. Residues 3121–3530 (CMPLQEVLVA…QMESLVTSFT (410 aa)) form a condensation 3 region. The Carrier 4 domain maps to 3564 to 3637 (SVLEQQIRDV…KLATHIQTTS (74 aa)). Serine 3598 is subject to O-(pantetheine 4'-phosphoryl)serine. The tract at residues 3679–4087 (VYPLTPLQAG…FESIRKHPDE (409 aa)) is condensation 4. Residues 4119 to 4195 (SAIDQFLDPL…KLCEVAFAKS (77 aa)) enclose the Carrier 5 domain. Serine 4156 carries the O-(pantetheine 4'-phosphoryl)serine modification. A condensation 5 region spans residues 4262–4589 (WVFKAENGLD…FNAHLNILWN (328 aa)).

It belongs to the NRP synthetase family.

Its pathway is siderophore biosynthesis. Functionally, nonribosomal peptide synthetase required for the biosynthetis of epichloenin A, an extracellular siderophore that plays a crucial role in endophyte-grass symbioses. SidN assembles epichloenin A by activating and incorporating three trans-anhydromevalonylhydroxyornithine (trans-AMHO), 1 glutamine and 4 glycine moieties. Trans-AMHO is produced from L-ornithine via 2 steps involving a L-ornithine N(5)-monooxygenase and an AHMO-N(5)-transacylase that have still to be identified. The third adenylation domain (A3) of sidN incorporates the hydroxamate groups of the siderophore which forms an octahedral iron complex. The other component amino acids are assembled by sidN adenylation domains A1 and A2. In Epichloe festucae (strain E2368), this protein is Nonribosomal peptide synthetase sidN.